Consider the following 547-residue polypeptide: Chaperonin GroEL (547 aa).

ATP-binding positions include 30–33 (TLGP), Lys51, 87–91 (DGTTT), Gly415, and Asp496.

This sequence belongs to the chaperonin (HSP60) family. Forms a cylinder of 14 subunits composed of two heptameric rings stacked back-to-back. Interacts with the co-chaperonin GroES.

The protein resides in the cytoplasm. It carries out the reaction ATP + H2O + a folded polypeptide = ADP + phosphate + an unfolded polypeptide.. Functionally, together with its co-chaperonin GroES, plays an essential role in assisting protein folding. The GroEL-GroES system forms a nano-cage that allows encapsulation of the non-native substrate proteins and provides a physical environment optimized to promote and accelerate protein folding. The polypeptide is Chaperonin GroEL (Chlorobaculum parvum (strain DSM 263 / NCIMB 8327) (Chlorobium vibrioforme subsp. thiosulfatophilum)).